Consider the following 245-residue polypeptide: tRNA pseudouridine synthase A (245 aa).

Catalysis depends on aspartate 52, which acts as the Nucleophile. Tyrosine 111 lines the substrate pocket.

This sequence belongs to the tRNA pseudouridine synthase TruA family. In terms of assembly, homodimer.

It catalyses the reaction uridine(38/39/40) in tRNA = pseudouridine(38/39/40) in tRNA. In terms of biological role, formation of pseudouridine at positions 38, 39 and 40 in the anticodon stem and loop of transfer RNAs. The chain is tRNA pseudouridine synthase A from Rhodopseudomonas palustris (strain BisB5).